The chain runs to 493 residues: 6-phosphogluconate dehydrogenase, decarboxylating (493 aa).

NADP(+) contacts are provided by residues 12-17 (GLAVMG), 35-37 (NRT), 77-79 (VKA), and Asn-105. Substrate contacts are provided by residues Asn-105 and 131 to 133 (SGG). Catalysis depends on Lys-187, which acts as the Proton acceptor. Residue 190 to 191 (HN) participates in substrate binding. The active-site Proton donor is Glu-194. Positions 195, 266, 293, 456, and 462 each coordinate substrate.

The protein belongs to the 6-phosphogluconate dehydrogenase family. As to quaternary structure, homodimer.

It catalyses the reaction 6-phospho-D-gluconate + NADP(+) = D-ribulose 5-phosphate + CO2 + NADPH. It functions in the pathway carbohydrate degradation; pentose phosphate pathway; D-ribulose 5-phosphate from D-glucose 6-phosphate (oxidative stage): step 3/3. Its function is as follows. Catalyzes the oxidative decarboxylation of 6-phosphogluconate to ribulose 5-phosphate and CO(2), with concomitant reduction of NADP to NADPH. The chain is 6-phosphogluconate dehydrogenase, decarboxylating (gnd) from Dictyostelium discoideum (Social amoeba).